Consider the following 609-residue polypeptide: Glutamine--fructose-6-phosphate aminotransferase [isomerizing] (609 aa).

The Nucleophile; for GATase activity role is filled by C2. A Glutamine amidotransferase type-2 domain is found at 2 to 218 (CGIVGAVAQR…EGDVVEVTRR (217 aa)). SIS domains follow at residues 286-426 (ADAL…LKGA) and 458-599 (LAEG…VDQP). The active-site For Fru-6P isomerization activity is K604.

Homodimer.

It is found in the cytoplasm. The enzyme catalyses D-fructose 6-phosphate + L-glutamine = D-glucosamine 6-phosphate + L-glutamate. In terms of biological role, catalyzes the first step in hexosamine metabolism, converting fructose-6P into glucosamine-6P using glutamine as a nitrogen source. The chain is Glutamine--fructose-6-phosphate aminotransferase [isomerizing] from Yersinia pestis.